We begin with the raw amino-acid sequence, 136 residues long: Glutaredoxin-C8 (136 aa).

The Glutaredoxin domain occupies 33–135 (SSFVKSTVKA…KLLNIDVKED (103 aa)). Cysteines 53 and 56 form a disulfide.

Belongs to the glutaredoxin family. CPYC subfamily.

Its subcellular location is the cytoplasm. In terms of biological role, has a glutathione-disulfide oxidoreductase activity in the presence of NADPH and glutathione reductase. Reduces low molecular weight disulfides and proteins. The polypeptide is Glutaredoxin-C8 (GRXC8) (Oryza sativa subsp. japonica (Rice)).